A 259-amino-acid polypeptide reads, in one-letter code: Imidazole glycerol phosphate synthase subunit HisF (259 aa).

Active-site residues include Asp11 and Asp130.

It belongs to the HisA/HisF family. In terms of assembly, heterodimer of HisH and HisF.

It is found in the cytoplasm. It carries out the reaction 5-[(5-phospho-1-deoxy-D-ribulos-1-ylimino)methylamino]-1-(5-phospho-beta-D-ribosyl)imidazole-4-carboxamide + L-glutamine = D-erythro-1-(imidazol-4-yl)glycerol 3-phosphate + 5-amino-1-(5-phospho-beta-D-ribosyl)imidazole-4-carboxamide + L-glutamate + H(+). It functions in the pathway amino-acid biosynthesis; L-histidine biosynthesis; L-histidine from 5-phospho-alpha-D-ribose 1-diphosphate: step 5/9. In terms of biological role, IGPS catalyzes the conversion of PRFAR and glutamine to IGP, AICAR and glutamate. The HisF subunit catalyzes the cyclization activity that produces IGP and AICAR from PRFAR using the ammonia provided by the HisH subunit. This Carboxydothermus hydrogenoformans (strain ATCC BAA-161 / DSM 6008 / Z-2901) protein is Imidazole glycerol phosphate synthase subunit HisF.